The following is a 473-amino-acid chain: Photosystem II CP43 reaction center protein (473 aa).

Positions 1-14 (MKTLYSLRRFYHVE) are excised as a propeptide. N-acetylthreonine is present on Thr15. Position 15 is a phosphothreonine (Thr15). 5 helical membrane-spanning segments follow: residues 69–93 (LFEV…PHLA), 134–155 (LLGP…KDRN), 178–200 (KALY…RKIT), 255–275 (KPFA…LSYS), and 291–312 (WFNN…ASQA). Glu367 is a [CaMn4O5] cluster binding site. Residues 447–471 (RARAAAAGFEKGIDRDFEPVLSMTP) form a helical membrane-spanning segment.

It belongs to the PsbB/PsbC family. PsbC subfamily. In terms of assembly, PSII is composed of 1 copy each of membrane proteins PsbA, PsbB, PsbC, PsbD, PsbE, PsbF, PsbH, PsbI, PsbJ, PsbK, PsbL, PsbM, PsbT, PsbX, PsbY, PsbZ, Psb30/Ycf12, at least 3 peripheral proteins of the oxygen-evolving complex and a large number of cofactors. It forms dimeric complexes. Requires Binds multiple chlorophylls and provides some of the ligands for the Ca-4Mn-5O cluster of the oxygen-evolving complex. It may also provide a ligand for a Cl- that is required for oxygen evolution. PSII binds additional chlorophylls, carotenoids and specific lipids. as cofactor.

It is found in the plastid. It localises to the chloroplast thylakoid membrane. Functionally, one of the components of the core complex of photosystem II (PSII). It binds chlorophyll and helps catalyze the primary light-induced photochemical processes of PSII. PSII is a light-driven water:plastoquinone oxidoreductase, using light energy to abstract electrons from H(2)O, generating O(2) and a proton gradient subsequently used for ATP formation. In Atropa belladonna (Belladonna), this protein is Photosystem II CP43 reaction center protein.